The primary structure comprises 202 residues: MSRYRGPRVRIIRRLGTLPGLTNKTPQLKSGSINQSTSNKKISQYRIRLEEKQKLRFHYGITERQLLNYVRIARRAKGSTGEVLLQLSEMRLDNVIFRLGMAPTIPGARQLVNHRHILVNDYIVDIPSYRCKPQDFITIKNQQKSETIISKNIEFYQKSKIPNHLTYSSLEKKGLVNQILDRESIGLKINELLVVEYYSRQA.

The S4 RNA-binding domain maps to 90-153 (MRLDNVIFRL…KSETIISKNI (64 aa)).

It belongs to the universal ribosomal protein uS4 family. As to quaternary structure, part of the 30S ribosomal subunit. Contacts protein S5. The interaction surface between S4 and S5 is involved in control of translational fidelity.

Its subcellular location is the plastid. The protein resides in the chloroplast. Functionally, one of the primary rRNA binding proteins, it binds directly to 16S rRNA where it nucleates assembly of the body of the 30S subunit. In terms of biological role, with S5 and S12 plays an important role in translational accuracy. The polypeptide is Small ribosomal subunit protein uS4c (rps4) (Sphaerocarpos donnelli (Liverwort)).